We begin with the raw amino-acid sequence, 220 residues long: Octanoyltransferase (220 aa).

In terms of domain architecture, BPL/LPL catalytic spans 31–217; the sequence is ENTPDEIWLV…HFAEILGYNA (187 aa). Substrate-binding positions include 70 to 77, 146 to 148, and 159 to 161; these read RGGQITYH, SLG, and GLA. Cys-177 functions as the Acyl-thioester intermediate in the catalytic mechanism.

This sequence belongs to the LipB family.

Its subcellular location is the cytoplasm. It carries out the reaction octanoyl-[ACP] + L-lysyl-[protein] = N(6)-octanoyl-L-lysyl-[protein] + holo-[ACP] + H(+). The protein operates within protein modification; protein lipoylation via endogenous pathway; protein N(6)-(lipoyl)lysine from octanoyl-[acyl-carrier-protein]: step 1/2. In terms of biological role, catalyzes the transfer of endogenously produced octanoic acid from octanoyl-acyl-carrier-protein onto the lipoyl domains of lipoate-dependent enzymes. Lipoyl-ACP can also act as a substrate although octanoyl-ACP is likely to be the physiological substrate. The polypeptide is Octanoyltransferase (Actinobacillus succinogenes (strain ATCC 55618 / DSM 22257 / CCUG 43843 / 130Z)).